A 143-amino-acid polypeptide reads, in one-letter code: D-aminoacyl-tRNA deacylase (143 aa).

Positions 135-136 match the Gly-cisPro motif, important for rejection of L-amino acids motif; that stretch reads GP.

The protein belongs to the DTD family. As to quaternary structure, homodimer.

The protein resides in the cytoplasm. The enzyme catalyses glycyl-tRNA(Ala) + H2O = tRNA(Ala) + glycine + H(+). It catalyses the reaction a D-aminoacyl-tRNA + H2O = a tRNA + a D-alpha-amino acid + H(+). Functionally, an aminoacyl-tRNA editing enzyme that deacylates mischarged D-aminoacyl-tRNAs. Also deacylates mischarged glycyl-tRNA(Ala), protecting cells against glycine mischarging by AlaRS. Acts via tRNA-based rather than protein-based catalysis; rejects L-amino acids rather than detecting D-amino acids in the active site. By recycling D-aminoacyl-tRNA to D-amino acids and free tRNA molecules, this enzyme counteracts the toxicity associated with the formation of D-aminoacyl-tRNA entities in vivo and helps enforce protein L-homochirality. The polypeptide is D-aminoacyl-tRNA deacylase (Mycolicibacterium gilvum (strain PYR-GCK) (Mycobacterium gilvum (strain PYR-GCK))).